A 321-amino-acid chain; its full sequence is Ferredoxin--NADP reductase (321 aa).

7 residues coordinate FAD: E33, Q41, Y46, V86, L119, D277, and S318.

This sequence belongs to the ferredoxin--NADP reductase type 2 family. In terms of assembly, homodimer. It depends on FAD as a cofactor.

The enzyme catalyses 2 reduced [2Fe-2S]-[ferredoxin] + NADP(+) + H(+) = 2 oxidized [2Fe-2S]-[ferredoxin] + NADPH. This chain is Ferredoxin--NADP reductase, found in Lactococcus lactis subsp. cremoris (strain MG1363).